The primary structure comprises 57 residues: Large ribosomal subunit protein bL33 (57 aa).

Belongs to the bacterial ribosomal protein bL33 family.

The polypeptide is Large ribosomal subunit protein bL33 (Shewanella pealeana (strain ATCC 700345 / ANG-SQ1)).